A 642-amino-acid chain; its full sequence is 5-aminolevulinate synthase, non-specific, mitochondrial (642 aa).

Residues 1–56 constitute a mitochondrion transit peptide; that stretch reads METVVRRCPFLSRVPQAFLQKAGKSLLFYAQNCPKMMEVGAKPAPRTVSTSAAQCQ. The tract at residues 51–109 is disordered; the sequence is SAAQCQQVKETPPANEKEKTAKAAVQQAPDESQMAQTPDGTQLPPGHPSPSTSQSSGSK. Residues 79 to 90 show a composition bias toward polar residues; sequence PDESQMAQTPDG. Low complexity predominate over residues 99 to 108; the sequence is SPSTSQSSGS. 3 residues coordinate substrate: Arg-219, Ser-336, and Lys-355. Ser-388, His-416, and Thr-444 together coordinate pyridoxal 5'-phosphate. Lys-447 is an active-site residue. Residue Lys-447 is modified to N6-(pyridoxal phosphate)lysine. Thr-476 and Thr-477 together coordinate pyridoxal 5'-phosphate. Residue Thr-564 coordinates substrate. Pro-578 is modified (hydroxyproline).

The protein belongs to the class-II pyridoxal-phosphate-dependent aminotransferase family. Homodimer. Interacts (hydroxylated form) with VHL. Pyridoxal 5'-phosphate is required as a cofactor. In normoxia, is hydroxylated at Pro-578, promoting interaction with VHL, initiating ubiquitination and subsequent degradation via the proteasome. Post-translationally, ubiquitinated; in normoxia following hydroxylation and interaction with VHL, leading to its subsequent degradation via the proteasome. As to expression, expressed in the liver, kidney, brain and testis.

The protein localises to the mitochondrion inner membrane. The enzyme catalyses succinyl-CoA + glycine + H(+) = 5-aminolevulinate + CO2 + CoA. It functions in the pathway porphyrin-containing compound metabolism; protoporphyrin-IX biosynthesis; 5-aminolevulinate from glycine: step 1/1. Catalyzes the pyridoxal 5'-phosphate (PLP)-dependent condensation of succinyl-CoA and glycine to form aminolevulinic acid (ALA), with CoA and CO2 as by-products. The protein is 5-aminolevulinate synthase, non-specific, mitochondrial (Alas1) of Rattus norvegicus (Rat).